The following is a 155-amino-acid chain: Small ribosomal subunit protein uS7cz/uS7cy (155 aa).

It belongs to the universal ribosomal protein uS7 family. Part of the 30S ribosomal subunit.

It is found in the plastid. Its subcellular location is the chloroplast. Functionally, one of the primary rRNA binding proteins, it binds directly to 16S rRNA where it nucleates assembly of the head domain of the 30S subunit. The sequence is that of Small ribosomal subunit protein uS7cz/uS7cy (rps7-A) from Psilotum nudum (Whisk fern).